A 487-amino-acid chain; its full sequence is 6-phosphogluconate dehydrogenase, decarboxylating 3, chloroplastic (487 aa).

Position 1 is an N-acetylmethionine (M1). NADP(+) is bound by residues 13-18, 36-38, 80-82, and N108; these read GLAVMG, NRT, and VKA. Substrate-binding positions include N108 and 134–136; that span reads SGG. K188 acts as the Proton acceptor in catalysis. Residue 191–192 participates in substrate binding; sequence HN. E195 functions as the Proton donor in the catalytic mechanism. Substrate-binding residues include Y196, K266, R293, R458, and H464.

It belongs to the 6-phosphogluconate dehydrogenase family. As to quaternary structure, forms homodimer. Forms heterodimers with PGD1 or PGD2.

The protein localises to the plastid. Its subcellular location is the chloroplast. It is found in the cytoplasm. The protein resides in the cytosol. It catalyses the reaction 6-phospho-D-gluconate + NADP(+) = D-ribulose 5-phosphate + CO2 + NADPH. The protein operates within carbohydrate degradation; pentose phosphate pathway; D-ribulose 5-phosphate from D-glucose 6-phosphate (oxidative stage): step 3/3. Functionally, catalyzes the oxidative decarboxylation of 6-phosphogluconate to ribulose 5-phosphate and CO(2), with concomitant reduction of NADP to NADPH. The chain is 6-phosphogluconate dehydrogenase, decarboxylating 3, chloroplastic from Arabidopsis thaliana (Mouse-ear cress).